Consider the following 400-residue polypeptide: Glycerol-3-phosphate dehydrogenase [NAD(+)] 1 (400 aa).

Residues 50–55, F138, K161, and A194 each bind NAD(+); that span reads GSGNWG. K161 contacts substrate. K254 (proton acceptor) is an active-site residue. 2 residues coordinate NAD(+): R319 and Q348. Residue 319–320 coordinates substrate; the sequence is RN.

Belongs to the NAD-dependent glycerol-3-phosphate dehydrogenase family.

The enzyme catalyses sn-glycerol 3-phosphate + NAD(+) = dihydroxyacetone phosphate + NADH + H(+). The chain is Glycerol-3-phosphate dehydrogenase [NAD(+)] 1 (GPD1) from Candida glabrata (strain ATCC 2001 / BCRC 20586 / JCM 3761 / NBRC 0622 / NRRL Y-65 / CBS 138) (Yeast).